We begin with the raw amino-acid sequence, 286 residues long: Carbohydrate-binding domain-containing protein Cthe_2159 (286 aa).

Residues 1–20 (MSIKKLILAASILTTLALTG) form the signal peptide. Cysteine 21 carries the N-palmitoyl cysteine lipid modification. Cysteine 21 carries the S-diacylglycerol cysteine lipid modification. Residues 124 to 225 (GKDNVLTDAE…GIKVENTEEP (102 aa)) are polygalacturonic acid-binding. Residues arginine 152, aspartate 153, aspartate 154, asparagine 177, aspartate 178, aspartate 215, aspartate 243, aspartate 244, and aspartate 247 each coordinate Ca(2+).

As to quaternary structure, monomer.

It is found in the cell membrane. In terms of biological role, binds cellulosic and pectic substrates. Displays no enzyme activity (in vitro). This Acetivibrio thermocellus (strain ATCC 27405 / DSM 1237 / JCM 9322 / NBRC 103400 / NCIMB 10682 / NRRL B-4536 / VPI 7372) (Clostridium thermocellum) protein is Carbohydrate-binding domain-containing protein Cthe_2159.